A 108-amino-acid polypeptide reads, in one-letter code: uncharacterized protein (108 aa).

Basic and acidic residues-rich tracts occupy residues 1–15 and 53–69; these read MSEA…EVLV and KLKD…RNSE. A disordered region spans residues 1–77; the sequence is MSEAKDNGSR…SELDQDEEDK (77 aa).

This is an uncharacterized protein from Homo sapiens (Human).